We begin with the raw amino-acid sequence, 92 residues long: Probable Fe(2+)-trafficking protein (92 aa).

Belongs to the Fe(2+)-trafficking protein family.

In terms of biological role, could be a mediator in iron transactions between iron acquisition and iron-requiring processes, such as synthesis and/or repair of Fe-S clusters in biosynthetic enzymes. In Shewanella woodyi (strain ATCC 51908 / MS32), this protein is Probable Fe(2+)-trafficking protein.